Here is a 401-residue protein sequence, read N- to C-terminus: MAKEIFKKQKPHINIGTIGHVDHGKTTLTAAITYVLAKNNQAKLKTYKEIDCAPEEIARGITIKTSHIEYETAVRHYAHIDCPGHADYIKNMITGAAQMDGAILVVSAVDGPMPQTKEHLLLAKQIGISNIIVFLNKIDLIDDNEILELVELETRELLDKYNFSSDTPIITGSALKALDNNLTSNIWVDKIYELLTALDSYIPLPKRDLDKPFLLAIEDIFSITGRGTVVTGKIERGSIKLGDTVTMLGFNISKNVVVIGLEMFQKTLEIGEAGDNVGILLRGIQKTEVKRGMILSKPLTMTLHSIFQADVYILTVAEGGREKPIFEGYCPQFYLYTINITGSIKFSSETKETGTKMILPGDRVKLNVTLIYSIAMEKGMRFAIREGGRTIGAGIITDIIK.

One can recognise a tr-type G domain in the interval 10 to 206 (KPHINIGTIG…ALDSYIPLPK (197 aa)). The tract at residues 19-26 (GHVDHGKT) is G1. 19–26 (GHVDHGKT) lines the GTP pocket. Residue T26 participates in Mg(2+) binding. Residues 60–64 (GITIK) form a G2 region. Residues 81–84 (DCPG) form a G3 region. Residues 81–85 (DCPGH) and 136–139 (NKID) each bind GTP. The interval 136–139 (NKID) is G4. The segment at 173 to 175 (SAL) is G5.

This sequence belongs to the TRAFAC class translation factor GTPase superfamily. Classic translation factor GTPase family. EF-Tu/EF-1A subfamily. In terms of assembly, monomer.

The protein resides in the plastid. Its subcellular location is the apicoplast. It catalyses the reaction GTP + H2O = GDP + phosphate + H(+). In terms of biological role, GTP hydrolase that promotes the GTP-dependent binding of aminoacyl-tRNA to the A-site of ribosomes during protein biosynthesis. The polypeptide is Elongation factor Tu, apicoplast (tufA) (Toxoplasma gondii).